The primary structure comprises 444 residues: Homogentisate 1,2-dioxygenase (444 aa).

H298 (proton acceptor) is an active-site residue. Fe cation-binding residues include H341 and E347. Positions 356 and 377 each coordinate homogentisate. H377 is a Fe cation binding site.

The protein belongs to the homogentisate dioxygenase family. As to quaternary structure, hexamer; dimer of trimers. Fe cation is required as a cofactor.

It catalyses the reaction homogentisate + O2 = 4-maleylacetoacetate + H(+). It functions in the pathway amino-acid degradation; L-phenylalanine degradation; acetoacetate and fumarate from L-phenylalanine: step 4/6. Its function is as follows. Involved in the catabolism of homogentisate (2,5-dihydroxyphenylacetate or 2,5-OH-PhAc), a central intermediate in the degradation of phenylalanine and tyrosine. Catalyzes the oxidative ring cleavage of the aromatic ring of homogentisate to yield maleylacetoacetate. This is Homogentisate 1,2-dioxygenase from Burkholderia ambifaria (strain ATCC BAA-244 / DSM 16087 / CCUG 44356 / LMG 19182 / AMMD) (Burkholderia cepacia (strain AMMD)).